A 468-amino-acid polypeptide reads, in one-letter code: 3-isopropylmalate dehydratase large subunit (468 aa).

[4Fe-4S] cluster contacts are provided by Cys349, Cys409, and Cys412.

This sequence belongs to the aconitase/IPM isomerase family. LeuC type 1 subfamily. As to quaternary structure, heterodimer of LeuC and LeuD. It depends on [4Fe-4S] cluster as a cofactor.

The catalysed reaction is (2R,3S)-3-isopropylmalate = (2S)-2-isopropylmalate. Its pathway is amino-acid biosynthesis; L-leucine biosynthesis; L-leucine from 3-methyl-2-oxobutanoate: step 2/4. Functionally, catalyzes the isomerization between 2-isopropylmalate and 3-isopropylmalate, via the formation of 2-isopropylmaleate. The sequence is that of 3-isopropylmalate dehydratase large subunit from Jannaschia sp. (strain CCS1).